The sequence spans 671 residues: MVNVMNTLSFASLSFNSNNTPVSEQFDDIYFSTQDGLEESYYVFQDGNQLWQKWQTHDVESFVIAETGFGTGLNFLAVADKFQQFLSEFPNSKLKRLYFISFEKFPLTSEQLATIHKNYPQFATLSQKMTACWQPRQTGCQRYHFEQIYLDVWFGDMLDNLPQLGDLYTNRIDAWFLDGFSPDKNPEMWNETLYRQMFSLTKNGGSFATFTAASTVRKGLQAVGFEVKKRKGFGKKREMLWGEKPQQSETAPVNYPYFYSESQTEANDIAVVGGGVASLFVVLSLLEKGKKVTLYCKDNALAQNASGNLQGAIYPQLSDDDERNIRFYVHCFDYALQRLSQIEPLVEFEHALTGVALYAYNDKTAKKLEKIARQTNDDSLFKLCSAAELSEKIGLKVPNGGAFMPQSGWLSPIQFVQGTFAYLQTKGLQIVLNHEVKDPQFSEGKWHWQHNGKTFSHQILVLANGHTLTQFQQAQGIPLYPVRGQVSQIPTTPALQQLKCVVCYDGYLTPVSKANTHCIGASHVRDKAETYFSLEEHHENVAKLQQNLTACDWTQGIDESQNLAKQGVRAALRDRVPMVGQMPNFSVQKVQYQNLYNQLRRKQAVENAANFANLYMVNGLASRGLTTAPLLGEMLASLICDEPLPISEDIWHVLSPNRTWIRKLLKGSKVE.

The interval 1–245 (MVNVMNTLSF…KREMLWGEKP (245 aa)) is tRNA (mnm(5)s(2)U34)-methyltransferase. Residues 272–671 (VGGGVASLFV…RKLLKGSKVE (400 aa)) are FAD-dependent cmnm(5)s(2)U34 oxidoreductase.

It in the N-terminal section; belongs to the methyltransferase superfamily. tRNA (mnm(5)s(2)U34)-methyltransferase family. This sequence in the C-terminal section; belongs to the DAO family. FAD serves as cofactor.

The protein resides in the cytoplasm. The enzyme catalyses 5-aminomethyl-2-thiouridine(34) in tRNA + S-adenosyl-L-methionine = 5-methylaminomethyl-2-thiouridine(34) in tRNA + S-adenosyl-L-homocysteine + H(+). Catalyzes the last two steps in the biosynthesis of 5-methylaminomethyl-2-thiouridine (mnm(5)s(2)U) at the wobble position (U34) in tRNA. Catalyzes the FAD-dependent demodification of cmnm(5)s(2)U34 to nm(5)s(2)U34, followed by the transfer of a methyl group from S-adenosyl-L-methionine to nm(5)s(2)U34, to form mnm(5)s(2)U34. This is tRNA 5-methylaminomethyl-2-thiouridine biosynthesis bifunctional protein MnmC from Actinobacillus pleuropneumoniae serotype 3 (strain JL03).